Here is a 236-residue protein sequence, read N- to C-terminus: Small ribosomal subunit protein uS3 (236 aa).

The region spanning 39–107 is the KH type-2 domain; sequence IREFLTEELK…DTSLNIVEVR (69 aa). The disordered stretch occupies residues 214–236; that stretch reads ASERRAVEGDNQGSSSNRRRENA.

It belongs to the universal ribosomal protein uS3 family. As to quaternary structure, part of the 30S ribosomal subunit. Forms a tight complex with proteins S10 and S14.

Its function is as follows. Binds the lower part of the 30S subunit head. Binds mRNA in the 70S ribosome, positioning it for translation. The sequence is that of Small ribosomal subunit protein uS3 from Brucella anthropi (strain ATCC 49188 / DSM 6882 / CCUG 24695 / JCM 21032 / LMG 3331 / NBRC 15819 / NCTC 12168 / Alc 37) (Ochrobactrum anthropi).